Reading from the N-terminus, the 256-residue chain is Transcription factor bHLH131 (256 aa).

The bHLH domain maps to 91–140; that stretch reads VAAKKHSDAERRRRLRINSQFATLRTILPNLVKQDKASVLGETVRYFNEL.

Homodimer.

The protein localises to the nucleus. This is Transcription factor bHLH131 (BHLH131) from Arabidopsis thaliana (Mouse-ear cress).